The chain runs to 48 residues: GASCRCDSDGPTSRGDTLTGTLWLIGRCPSGWHNCRGSGPFIGYCCKQ.

Cystine bridges form between Cys4-Cys45, Cys6-Cys35, and Cys28-Cys46.

The protein belongs to the sea anemone sodium channel inhibitory toxin family. Type I subfamily.

The protein resides in the secreted. Its subcellular location is the nematocyst. Binds voltage-dependently at site 3 of sodium channels (Nav) and inhibits the inactivation of the activated channels, thereby blocking neuronal transmission. Has effect on SCN4A/SCN1B, and SCN5A/SCN1B, has no effect on SCN2A/SCN1B, and SCN10A/SCN1B. Possesses the highest efficacy for the insect sodium channel para/tipE. Also interacts with sodium channels in cardiac cells. Shows lethality to crabs. This Bunodosoma granuliferum (Red warty sea anemone) protein is Delta-actitoxin-Bgr2b.